The following is a 256-amino-acid chain: Triosephosphate isomerase (256 aa).

Asparagine 9–lysine 11 lines the substrate pocket. The active-site Electrophile is the histidine 97. The active-site Proton acceptor is glutamate 169. Residues glycine 175, serine 214, and glycine 235–glycine 236 each bind substrate.

This sequence belongs to the triosephosphate isomerase family. As to quaternary structure, homodimer.

It localises to the cytoplasm. It carries out the reaction D-glyceraldehyde 3-phosphate = dihydroxyacetone phosphate. Its pathway is carbohydrate biosynthesis; gluconeogenesis. It participates in carbohydrate degradation; glycolysis; D-glyceraldehyde 3-phosphate from glycerone phosphate: step 1/1. Functionally, involved in the gluconeogenesis. Catalyzes stereospecifically the conversion of dihydroxyacetone phosphate (DHAP) to D-glyceraldehyde-3-phosphate (G3P). The polypeptide is Triosephosphate isomerase (Moritella marina (Vibrio marinus)).